A 444-amino-acid chain; its full sequence is Glutamate-1-semialdehyde 2,1-aminomutase (444 aa).

N6-(pyridoxal phosphate)lysine is present on lysine 278.

The protein belongs to the class-III pyridoxal-phosphate-dependent aminotransferase family. HemL subfamily. As to quaternary structure, homodimer. Requires pyridoxal 5'-phosphate as cofactor.

It localises to the cytoplasm. It catalyses the reaction (S)-4-amino-5-oxopentanoate = 5-aminolevulinate. Its pathway is porphyrin-containing compound metabolism; protoporphyrin-IX biosynthesis; 5-aminolevulinate from L-glutamyl-tRNA(Glu): step 2/2. This is Glutamate-1-semialdehyde 2,1-aminomutase from Deinococcus radiodurans (strain ATCC 13939 / DSM 20539 / JCM 16871 / CCUG 27074 / LMG 4051 / NBRC 15346 / NCIMB 9279 / VKM B-1422 / R1).